We begin with the raw amino-acid sequence, 156 residues long: Pilin-like protein PilA1 (156 aa).

The propeptide at 1-5 (MTRRG) is leader sequence. Leu6 carries the post-translational modification N-methylleucine. Residues 6–29 (LTLLELLLVLGILGVLLGLALPLL) form a helical membrane-spanning segment.

Its subcellular location is the cell inner membrane. The protein resides in the cell outer membrane. It is found in the periplasm. Plays an essential role in natural DNA transformation but is not required for pilus biogenesis. The polypeptide is Pilin-like protein PilA1 (pilA1) (Thermus thermophilus (strain ATCC BAA-163 / DSM 7039 / HB27)).